The chain runs to 46 residues: Protein PsbN (46 aa).

Residues 10 to 30 (LIITILAVTIAFTAVSLYTAF) traverse the membrane as a helical segment.

Belongs to the PsbN family.

The protein localises to the cellular thylakoid membrane. Functionally, may play a role in photosystem I and II biogenesis. This Acaryochloris marina (strain MBIC 11017) protein is Protein PsbN.